The sequence spans 367 residues: Probable butyrate kinase (367 aa).

The protein belongs to the acetokinase family.

The protein resides in the cytoplasm. It carries out the reaction butanoate + ATP = butanoyl phosphate + ADP. In Bacillus cereus (strain ZK / E33L), this protein is Probable butyrate kinase.